The chain runs to 158 residues: Transcription elongation factor GreA (158 aa).

Residues 47–68 are a coiled coil; sequence AEYDAAKEAQGLLELKIKKMEE.

The protein belongs to the GreA/GreB family.

Necessary for efficient RNA polymerase transcription elongation past template-encoded arresting sites. The arresting sites in DNA have the property of trapping a certain fraction of elongating RNA polymerases that pass through, resulting in locked ternary complexes. Cleavage of the nascent transcript by cleavage factors such as GreA or GreB allows the resumption of elongation from the new 3'terminus. GreA releases sequences of 2 to 3 nucleotides. The protein is Transcription elongation factor GreA of Flavobacterium psychrophilum (strain ATCC 49511 / DSM 21280 / CIP 103535 / JIP02/86).